A 290-amino-acid chain; its full sequence is Sodium/potassium-transporting ATPase subunit beta-2 (290 aa).

Topologically, residues 1 to 39 (MVIQKEKKSCGQVVEEWKEFVWNPRTHQFMGRTGTSWAF) are cytoplasmic. A helical; Signal-anchor for type II membrane protein transmembrane segment spans residues 40–67 (ILLFYLVFYGFLTAMFSLTMWVMLQTVS). Residues 68–290 (DHTPKYQDRL…VAFKLRINKT (223 aa)) lie on the Extracellular side of the membrane. N-linked (GlcNAc...) asparagine glycans are attached at residues asparagine 96 and asparagine 118. A disulfide bridge links cysteine 129 with cysteine 150. Asparagine 153 carries an N-linked (GlcNAc...) asparagine glycan. Cysteine 160 and cysteine 177 are oxidised to a cystine. N-linked (GlcNAc...) asparagine glycans are attached at residues asparagine 193, asparagine 197, asparagine 220, and asparagine 238. The immunoglobulin-like stretch occupies residues 193-290 (NQSMNVTCVG…VAFKLRINKT (98 aa)). Cysteine 200 and cysteine 261 are disulfide-bonded.

It belongs to the X(+)/potassium ATPases subunit beta family. As to quaternary structure, the sodium/potassium-transporting ATPase is composed of a catalytic alpha subunit, an auxiliary non-catalytic beta subunit and an additional regulatory subunit. Interacts with isoform 2 of BSG.

The protein resides in the cell membrane. In terms of biological role, this is the non-catalytic component of the active enzyme, which catalyzes the hydrolysis of ATP coupled with the exchange of Na(+) and K(+) ions across the plasma membrane. The exact function of the beta-2 subunit is not known. Its function is as follows. Mediates cell adhesion of neurons and astrocytes, and promotes neurite outgrowth. In Mus musculus (Mouse), this protein is Sodium/potassium-transporting ATPase subunit beta-2 (Atp1b2).